A 252-amino-acid polypeptide reads, in one-letter code: uncharacterized protein (252 aa).

A coiled-coil region spans residues 106–140; sequence IQSLHARRDHLDNAVEQLKSQLSRLDSSVAILKSQ.

This is an uncharacterized protein from Caenorhabditis elegans.